We begin with the raw amino-acid sequence, 110 residues long: NADH-quinone oxidoreductase subunit K (110 aa).

The next 3 membrane-spanning stretches (helical) occupy residues 7–27, 31–51, and 73–93; these read LGSY…GVFV, IIAI…NFIA, and IFVI…VIAI.

Belongs to the complex I subunit 4L family. In terms of assembly, NDH-1 is composed of 14 different subunits. Subunits NuoA, H, J, K, L, M, N constitute the membrane sector of the complex.

The protein resides in the cell membrane. The enzyme catalyses a quinone + NADH + 5 H(+)(in) = a quinol + NAD(+) + 4 H(+)(out). Its function is as follows. NDH-1 shuttles electrons from NADH, via FMN and iron-sulfur (Fe-S) centers, to quinones in the respiratory chain. The immediate electron acceptor for the enzyme in this species is believed to be a menaquinone. Couples the redox reaction to proton translocation (for every two electrons transferred, four hydrogen ions are translocated across the cytoplasmic membrane), and thus conserves the redox energy in a proton gradient. In Desulfitobacterium hafniense (strain DSM 10664 / DCB-2), this protein is NADH-quinone oxidoreductase subunit K.